A 198-amino-acid chain; its full sequence is Recombination protein RecR (198 aa).

The segment at 58 to 73 (CSVCGNFTDTDPCAIC) adopts a C4-type zinc-finger fold. One can recognise a Toprim domain in the interval 81–175 (DIICVVEQPK…KVTRIAAGIP (95 aa)).

This sequence belongs to the RecR family.

Functionally, may play a role in DNA repair. It seems to be involved in an RecBC-independent recombinational process of DNA repair. It may act with RecF and RecO. The polypeptide is Recombination protein RecR (Clostridium perfringens (strain ATCC 13124 / DSM 756 / JCM 1290 / NCIMB 6125 / NCTC 8237 / Type A)).